A 249-amino-acid polypeptide reads, in one-letter code: Small ribosomal subunit protein uS5 (249 aa).

The span at 1–14 (MSAEAPKRQFGDRR) shows a compositional bias: basic and acidic residues. A disordered region spans residues 1 to 29 (MSAEAPKRQFGDRRRGGRRGGRRDGEEKG). Positions 71–134 (LKDDVMKIRS…VIAKLSIIPI (64 aa)) constitute an S5 DRBM domain.

Belongs to the universal ribosomal protein uS5 family. As to quaternary structure, component of the small ribosomal subunit. Mature ribosomes consist of a small (40S) and a large (60S) subunit. The 40S subunit contains about 32 different proteins and 1 molecule of RNA (18S). The 60S subunit contains 45 different proteins and 3 molecules of RNA (25S, 5.8S and 5S).

The protein resides in the cytoplasm. Component of the ribosome, a large ribonucleoprotein complex responsible for the synthesis of proteins in the cell. The small ribosomal subunit (SSU) binds messenger RNAs (mRNAs) and translates the encoded message by selecting cognate aminoacyl-transfer RNA (tRNA) molecules. The large subunit (LSU) contains the ribosomal catalytic site termed the peptidyl transferase center (PTC), which catalyzes the formation of peptide bonds, thereby polymerizing the amino acids delivered by tRNAs into a polypeptide chain. The nascent polypeptides leave the ribosome through a tunnel in the LSU and interact with protein factors that function in enzymatic processing, targeting, and the membrane insertion of nascent chains at the exit of the ribosomal tunnel. RPS2 is important for the assembly and function of the 40S ribosomal subunitand is nvolved in nucleolar processing of pre-18S ribosomal RNA and ribosome assembly. This chain is Small ribosomal subunit protein uS5 (RPS21), found in Candida albicans (strain SC5314 / ATCC MYA-2876) (Yeast).